A 309-amino-acid polypeptide reads, in one-letter code: Ribosomal RNA large subunit methyltransferase F (309 aa).

It belongs to the methyltransferase superfamily. METTL16/RlmF family.

The protein localises to the cytoplasm. It carries out the reaction adenosine(1618) in 23S rRNA + S-adenosyl-L-methionine = N(6)-methyladenosine(1618) in 23S rRNA + S-adenosyl-L-homocysteine + H(+). In terms of biological role, specifically methylates the adenine in position 1618 of 23S rRNA. The protein is Ribosomal RNA large subunit methyltransferase F of Cronobacter sakazakii (strain ATCC BAA-894) (Enterobacter sakazakii).